The following is a 49-amino-acid chain: Small, acid-soluble spore protein K (49 aa).

The disordered stretch occupies residues 1-49 (MRNKAKGFPNQVNHKFEGEPGATDAYASKRPNGETNTRPQERMRASGKR). The segment covering 39-49 (PQERMRASGKR) has biased composition (basic and acidic residues).

This sequence belongs to the SspK family.

Its subcellular location is the spore core. The protein is Small, acid-soluble spore protein K of Bacillus pumilus (strain SAFR-032).